The sequence spans 247 residues: E3 ubiquitin-protein ligase RNF182 (247 aa).

An RING-type zinc finger spans residues 20–68 (CKICYNRYNLKQRKPKVLECCHRVCAKCLYKIIDFGDSPQGVIVCPFCR). 2 consecutive transmembrane segments (helical) span residues 184-204 (VLVW…IYLL) and 211-231 (LGVV…VYGF).

As to quaternary structure, interacts with ATP6V0C.

The protein resides in the membrane. The protein localises to the cytoplasm. The enzyme catalyses S-ubiquitinyl-[E2 ubiquitin-conjugating enzyme]-L-cysteine + [acceptor protein]-L-lysine = [E2 ubiquitin-conjugating enzyme]-L-cysteine + N(6)-ubiquitinyl-[acceptor protein]-L-lysine.. Its pathway is protein modification; protein ubiquitination. Functionally, E3 ubiquitin-protein ligase that mediates the ubiquitination of ATP6V0C and targets it to degradation via the ubiquitin-proteasome pathway. Also plays a role in the inhibition of TLR-triggered innate immune response by mediating 'Lys'-48-linked ubiquitination and subsequent degradation of NF-kappa-B component RELA. The polypeptide is E3 ubiquitin-protein ligase RNF182 (RNF182) (Ailuropoda melanoleuca (Giant panda)).